The primary structure comprises 147 residues: Ribosome-binding factor A (147 aa).

The segment at Leu-123–Asp-147 is disordered.

It belongs to the RbfA family. As to quaternary structure, monomer. Binds 30S ribosomal subunits, but not 50S ribosomal subunits or 70S ribosomes.

The protein localises to the cytoplasm. One of several proteins that assist in the late maturation steps of the functional core of the 30S ribosomal subunit. Associates with free 30S ribosomal subunits (but not with 30S subunits that are part of 70S ribosomes or polysomes). Required for efficient processing of 16S rRNA. May interact with the 5'-terminal helix region of 16S rRNA. This is Ribosome-binding factor A from Corynebacterium aurimucosum (strain ATCC 700975 / DSM 44827 / CIP 107346 / CN-1) (Corynebacterium nigricans).